The primary structure comprises 251 residues: Triosephosphate isomerase (251 aa).

9 to 11 contributes to the substrate binding site; the sequence is NWK. Residue histidine 95 is the Electrophile of the active site. Glutamate 167 (proton acceptor) is an active-site residue. Residues glycine 173, serine 213, and 234–235 each bind substrate; that span reads GG. Serine 213 bears the Phosphoserine mark.

This sequence belongs to the triosephosphate isomerase family. Homodimer.

The protein localises to the cytoplasm. It carries out the reaction D-glyceraldehyde 3-phosphate = dihydroxyacetone phosphate. It functions in the pathway carbohydrate biosynthesis; gluconeogenesis. The protein operates within carbohydrate degradation; glycolysis; D-glyceraldehyde 3-phosphate from glycerone phosphate: step 1/1. Its function is as follows. Involved in the gluconeogenesis. Catalyzes stereospecifically the conversion of dihydroxyacetone phosphate (DHAP) to D-glyceraldehyde-3-phosphate (G3P). The protein is Triosephosphate isomerase of Bacillus mycoides (strain KBAB4) (Bacillus weihenstephanensis).